The sequence spans 85 residues: U4-theraphotoxin-Hhn1w (85 aa).

An N-terminal signal peptide occupies residues 1-22 (MKVTLIAILTCAAVLALHTTAA). A propeptide spanning residues 23-48 (EELEAESQLMEVGMPDTELAAVDEER) is cleaved from the precursor. Intrachain disulfides connect Cys52–Cys66, Cys56–Cys77, and Cys71–Cys82.

This sequence belongs to the neurotoxin 12 (Hwtx-2) family. 02 (Hwtx-2) subfamily. In terms of tissue distribution, expressed by the venom gland.

It localises to the secreted. In terms of biological role, postsynaptic neurotoxin. This chain is U4-theraphotoxin-Hhn1w, found in Cyriopagopus hainanus (Chinese bird spider).